The following is a 214-amino-acid chain: Phosphatidylcholine transfer protein (214 aa).

N-acetylmethionine is present on M1. An START domain is found at 1–212 (MELAAGSFSE…MARACQNYLK (212 aa)). Y72 and R78 together coordinate a 1,2-diacyl-sn-glycero-3-phosphocholine. S139 carries the phosphoserine modification. Q157 provides a ligand contact to a 1,2-diacyl-sn-glycero-3-phosphocholine.

As to quaternary structure, interacts with ACOT13/THEM2. In terms of tissue distribution, highest expression in liver, placenta, testis, kidney and heart. Low levels in brain and lung. No expression detected in thymus.

It is found in the cytoplasm. Catalyzes the transfer of phosphatidylcholine between membranes. Binds a single lipid molecule. The sequence is that of Phosphatidylcholine transfer protein (PCTP) from Homo sapiens (Human).